Reading from the N-terminus, the 726-residue chain is F-box protein COS111 (726 aa).

In terms of domain architecture, F-box spans 143–194 (FADINCLPEEIICRIIANLNDADSQRNCLLVSQEWSECAKRIIYKDVKFTST). The interval 276–295 (RSRTRRSSDASSMNSSVFSH) is disordered. Low complexity predominate over residues 284-295 (DASSMNSSVFSH).

F-box protein probably involved in ubiquitin conjugation pathway. The chain is F-box protein COS111 (COS111) from Kluyveromyces lactis (strain ATCC 8585 / CBS 2359 / DSM 70799 / NBRC 1267 / NRRL Y-1140 / WM37) (Yeast).